Here is a 194-residue protein sequence, read N- to C-terminus: Imidazoleglycerol-phosphate dehydratase (194 aa).

This sequence belongs to the imidazoleglycerol-phosphate dehydratase family.

The protein resides in the cytoplasm. The catalysed reaction is D-erythro-1-(imidazol-4-yl)glycerol 3-phosphate = 3-(imidazol-4-yl)-2-oxopropyl phosphate + H2O. It participates in amino-acid biosynthesis; L-histidine biosynthesis; L-histidine from 5-phospho-alpha-D-ribose 1-diphosphate: step 6/9. The protein is Imidazoleglycerol-phosphate dehydratase of Rubrobacter xylanophilus (strain DSM 9941 / JCM 11954 / NBRC 16129 / PRD-1).